A 258-amino-acid chain; its full sequence is Type III pantothenate kinase (258 aa).

6–13 (DVGNTNTV) serves as a coordination point for ATP. Substrate contacts are provided by residues Y100 and 107–110 (GADR). The active-site Proton acceptor is D109. D129 is a binding site for K(+). T132 lines the ATP pocket. Residue T184 participates in substrate binding.

This sequence belongs to the type III pantothenate kinase family. In terms of assembly, homodimer. NH4(+) is required as a cofactor. Requires K(+) as cofactor.

It is found in the cytoplasm. It catalyses the reaction (R)-pantothenate + ATP = (R)-4'-phosphopantothenate + ADP + H(+). The protein operates within cofactor biosynthesis; coenzyme A biosynthesis; CoA from (R)-pantothenate: step 1/5. With respect to regulation, not regulated by feedback inhibition by CoA and its thioesters as described for many other pantothenate kinases. Not inhibited by N-pentylpantothenamide (N5-Pan), and this compound cannot act as a substrate either. Catalyzes the phosphorylation of pantothenate (Pan), the first step in CoA biosynthesis. Cannot utilize a phosphoryl donor other than ATP. The protein is Type III pantothenate kinase (coaX) of Bacillus subtilis (strain 168).